Reading from the N-terminus, the 88-residue chain is Toxin RelE3 (88 aa).

The protein belongs to the RelE toxin family. Forms heterodimers with RelB3 and possibly a heterotetramer RelE3-RelB3(2)-RelE3 from 2 heterodimers. The heterotetramer is probably not very stable in solution.

Toxic component of a type II toxin-antitoxin (TA) system. Has RNase activity. Is very toxic upon expression in E.coli. Its toxic activity is probably neutralized by the cognate antitoxin RelB3. The chain is Toxin RelE3 (relE3) from Methanocaldococcus jannaschii (strain ATCC 43067 / DSM 2661 / JAL-1 / JCM 10045 / NBRC 100440) (Methanococcus jannaschii).